Consider the following 586-residue polypeptide: Exopolysaccharide phosphotransferase SCO6023 (586 aa).

Belongs to the stealth family.

In Streptomyces coelicolor (strain ATCC BAA-471 / A3(2) / M145), this protein is Exopolysaccharide phosphotransferase SCO6023.